The primary structure comprises 62 residues: Large ribosomal subunit protein uL30 (62 aa).

Belongs to the universal ribosomal protein uL30 family. In terms of assembly, part of the 50S ribosomal subunit.

This Herpetosiphon aurantiacus (strain ATCC 23779 / DSM 785 / 114-95) protein is Large ribosomal subunit protein uL30.